Here is a 677-residue protein sequence, read N- to C-terminus: Methionine--tRNA ligase (677 aa).

Residues 15-25 (PYANGSIHLGH) carry the 'HIGH' region motif. Positions 146, 149, 159, and 162 each coordinate Zn(2+). The 'KMSKS' region motif lies at 333 to 337 (KMSKS). An ATP-binding site is contributed by K336. Residues 575-677 (DFAKVDLRVA…AGAKPGHQVK (103 aa)) enclose the tRNA-binding domain.

Belongs to the class-I aminoacyl-tRNA synthetase family. MetG type 1 subfamily. As to quaternary structure, homodimer. Zn(2+) serves as cofactor.

The protein localises to the cytoplasm. The enzyme catalyses tRNA(Met) + L-methionine + ATP = L-methionyl-tRNA(Met) + AMP + diphosphate. Functionally, is required not only for elongation of protein synthesis but also for the initiation of all mRNA translation through initiator tRNA(fMet) aminoacylation. The protein is Methionine--tRNA ligase of Escherichia coli (strain SE11).